A 164-amino-acid polypeptide reads, in one-letter code: 2S seed storage protein 3 (164 aa).

A signal peptide spans 1–21 (MANKLFLVCATLALCFLLTNA). 2 consecutive propeptides follow at residues 22 to 37 (SIYR…DASN) and 73 to 81 (GPSLDDEFD).

Belongs to the 2S seed storage albumins family. As to quaternary structure, the mature protein consists of a small and a large chain linked by disulfide bonds. Interacts with AHK2.

This is a 2S seed storage protein. The sequence is that of 2S seed storage protein 3 (AT2S3) from Arabidopsis thaliana (Mouse-ear cress).